The primary structure comprises 768 residues: P-selectin (768 aa).

A signal peptide spans 1–41 (MAGCPKGSWTPRLRSVILGGAQLIWFSALISELVNQKEVAA). The Extracellular segment spans residues 42-709 (WTYNYSTKAY…QAGTLTIQEA (668 aa)). The region spanning 58 to 158 (VFCRRHFTDL…PCFKRKRALC (101 aa)) is the C-type lectin domain. Intrachain disulfides connect C60–C158, C131–C150, C163–C174, C168–C183, C185–C194, C200–C244, C230–C257, C262–C306, C292–C319, C324–C368, C354–C381, C386–C430, C416–C443, C448–C492, C478–C505, C510–C554, C540–C567, C580–C624, C610–C637, C642–C686, and C672–C699. The Ca(2+) site is built by E121, N123, and N124. Residue N123 participates in a carbohydrate binding. A carbohydrate-binding residues include E133 and N146. Positions 146 and 147 each coordinate Ca(2+). The region spanning 159–195 (YTASCQDMSCSNQGECIETIGSYTCSCYPGFYGPECE) is the EGF-like domain. Sushi domains are found at residues 198–259 (KECG…KCDA), 260–321 (VQCQ…TCEA), 322–383 (IACE…FCEA), 384–445 (LQCP…ECQA), 446–507 (VSCA…TCEA), 508–569 (IKCP…TCKG), 578–639 (VRCP…MCRA), and 640–701 (VKCS…TCQA). N398 carries N-linked (GlcNAc...) asparagine glycosylation. Residue N603 is glycosylated (N-linked (GlcNAc...) asparagine). N-linked (GlcNAc...) asparagine glycosylation is found at N654, N661, and N679. Residues 710-733 (LTYLGGAVASTTGLAVGGTLLALL) form a helical membrane-spanning segment. Residues 734-768 (RKRLRKKDDGKCPLNPHSHLGTYGVFTNAAYDPTP) lie on the Cytoplasmic side of the membrane. Residue C745 is the site of S-palmitoyl cysteine; alternate attachment. C745 carries S-stearoyl cysteine; alternate lipidation. Residues 756-759 (YGVF) carry the Endocytosis signal motif. Residues 759–768 (FTNAAYDPTP) form an interaction with SNX17 region.

The protein belongs to the selectin/LECAM family. As to quaternary structure, interacts with SNX17. Interacts with SELPLG/PSGL1 and PODXL2 and mediates neutrophil adhesion and leukocyte rolling. This interaction requires the sialyl-Lewis X epitope of SELPLG and PODXL2, and specific tyrosine sulfation on SELPLG. Interacts (via C-type lectin domain) with alpha-IIb/beta3 integrin ITGA2B:ITGB3 and alpha-V/beta-3 integrin ITGAV:ITGB3. Interacts with alpha5/beta1 integrin ITGA5:ITGB1 and alpha4/beta1 integrin ITGA4:ITGB. As to expression, stored in the alpha-granules of platelets and Weibel-Palade bodies of endothelial cells. Upon cell activation by agonists, P-selectin is transported rapidly to the cell surface.

The protein resides in the cell membrane. Its function is as follows. Ca(2+)-dependent receptor for myeloid cells that binds to carbohydrates on neutrophils and monocytes. Mediates the interaction of activated endothelial cells or platelets with leukocytes. The ligand recognized is sialyl-Lewis X. Mediates rapid rolling of leukocyte rolling over vascular surfaces during the initial steps in inflammation through interaction with SELPLG. Mediates cell-cell interactions and cell adhesion via the interaction with integrin alpha-IIb/beta3 (ITGA2B:ITGB3) and integrin alpha-V/beta-3 (ITGAV:ITGB3). This chain is P-selectin (Selp), found in Mus musculus (Mouse).